The sequence spans 403 residues: Tyrosine--tRNA ligase (403 aa).

A 'HIGH' region motif is present at residues 42–51 (PTAPDLHLGH). The 'KMSKS' region signature appears at 226–230 (KMSKS). Lys229 lines the ATP pocket. The 61-residue stretch at 336–396 (MPISAVLNKA…GKKAFGRVTL (61 aa)) folds into the S4 RNA-binding domain.

The protein belongs to the class-I aminoacyl-tRNA synthetase family. TyrS type 2 subfamily. In terms of assembly, homodimer.

The protein localises to the cytoplasm. It catalyses the reaction tRNA(Tyr) + L-tyrosine + ATP = L-tyrosyl-tRNA(Tyr) + AMP + diphosphate + H(+). Catalyzes the attachment of tyrosine to tRNA(Tyr) in a two-step reaction: tyrosine is first activated by ATP to form Tyr-AMP and then transferred to the acceptor end of tRNA(Tyr). In Pseudomonas savastanoi pv. phaseolicola (strain 1448A / Race 6) (Pseudomonas syringae pv. phaseolicola (strain 1448A / Race 6)), this protein is Tyrosine--tRNA ligase.